The chain runs to 256 residues: Tumor necrosis factor receptor superfamily member 9 (256 aa).

The first 23 residues, 1 to 23 (MGNNCYNVVVIVLLLVGCEKVGA), serve as a signal peptide directing secretion. TNFR-Cys repeat units follow at residues 24–45 (VQNS…PVCK), 46–85 (SCPP…NAEC), 86–117 (ECIE…QGCK), and 118–159 (TCSL…VVCG). Topologically, residues 24–187 (VQNSCDNCQP…GPGGHSLQVL (164 aa)) are extracellular. Intrachain disulfides connect cysteine 28–cysteine 37, cysteine 31–cysteine 44, cysteine 47–cysteine 61, cysteine 64–cysteine 77, cysteine 67–cysteine 85, cysteine 87–cysteine 93, cysteine 98–cysteine 105, cysteine 101–cysteine 116, and cysteine 119–cysteine 133. Asparagine 128 and asparagine 138 each carry an N-linked (GlcNAc...) asparagine glycan. Cysteine 139 and cysteine 158 are disulfide-bonded. Residues 188-208 (TLFLALTSALLLALIFITLLF) traverse the membrane as a helical segment. Residues 209–256 (SVLKWIRKKFPHIFKQPFKKTTGAAQEEDACSCRCPQEEEGGGGGYEL) lie on the Cytoplasmic side of the membrane.

Predominantly homodimeric, but may also exist as a monomer. Associates with p56-LCK. Interacts with TRAF1, TRAF2 and TRAF3. As to expression, expressed in activated thymocytes, splenic T cells, CD4(+), and CD8(+) T-cells.

It localises to the cell membrane. Receptor for TNFSF9/4-1BBL. Conveys a signal that enhances CD8(+) T-cell survival, cytotoxicity, and mitochondrial activity, thereby promoting immunity against viruses and tumors. The protein is Tumor necrosis factor receptor superfamily member 9 (Tnfrsf9) of Mus musculus (Mouse).